Consider the following 419-residue polypeptide: Zinc finger protein Pegasus (419 aa).

Lys5 participates in a covalent cross-link: Glycyl lysine isopeptide (Lys-Gly) (interchain with G-Cter in SUMO2). A disordered region spans residues 36–55 (DKEAETLQGAGTDGDQNGLD). C2H2-type zinc fingers lie at residues 82 to 104 (LKCRYCNYASKGTARLIEHIRIH), 110 to 132 (HRCHLCPFASAYERHLEAHMRSH), and 138 to 161 (YKCELCSFRCSDRSNLSHHRRRKH). Lys185 is covalently cross-linked (Glycyl lysine isopeptide (Lys-Gly) (interchain with G-Cter in SUMO2)). Polar residues predominate over residues 262–273 (LSSLPPENQNPA). Disordered regions lie at residues 262 to 284 (LSSLPPENQNPASPDVDACPDEK) and 297 to 356 (VSAV…PTLP). Low complexity predominate over residues 297-311 (VSAVSASIPQSSSPT). A compositionally biased stretch (polar residues) spans 332-349 (SEPSAHTSTPSIGNSQPS). 2 consecutive C2H2-type zinc fingers follow at residues 364 to 386 (HHCQHCDVYFADNVLYTVHMGCH) and 392 to 416 (FQCNVCGCKCKDKYDFACHFARGQH).

The protein belongs to the Ikaros C2H2-type zinc-finger protein family. As to quaternary structure, self-associates. Interacts with other family members; IKZF1, IKZF2, IKZF3 and IKZF4.

It localises to the nucleus. Functionally, transcriptional repressor that binds the core 5'GNNTGTNG-3' DNA consensus sequence. Involved in megakaryocyte differentiation. The sequence is that of Zinc finger protein Pegasus (Ikzf5) from Mus musculus (Mouse).